The following is a 295-amino-acid chain: Protoheme IX farnesyltransferase (295 aa).

The next 9 membrane-spanning stretches (helical) occupy residues 8-28, 35-55, 74-94, 98-118, 132-152, 162-182, 208-228, 233-253, and 264-284; these read VTKP…FLLA, YPLF…GCVF, VLVK…VLGI, LLLY…GFVI, VYGT…GYCA, LILL…IAIF, ITLY…SGYA, LVVA…GYKA, and FVFS…DFNV.

This sequence belongs to the UbiA prenyltransferase family. Protoheme IX farnesyltransferase subfamily.

The protein localises to the cell inner membrane. The enzyme catalyses heme b + (2E,6E)-farnesyl diphosphate + H2O = Fe(II)-heme o + diphosphate. It participates in porphyrin-containing compound metabolism; heme O biosynthesis; heme O from protoheme: step 1/1. In terms of biological role, converts heme B (protoheme IX) to heme O by substitution of the vinyl group on carbon 2 of heme B porphyrin ring with a hydroxyethyl farnesyl side group. This Yersinia pseudotuberculosis serotype O:1b (strain IP 31758) protein is Protoheme IX farnesyltransferase.